The following is a 436-amino-acid chain: 3-phosphoshikimate 1-carboxyvinyltransferase (436 aa).

3-phosphoshikimate contacts are provided by lysine 23, serine 24, and arginine 28. Lysine 23 is a binding site for phosphoenolpyruvate. Residues glycine 97 and arginine 126 each contribute to the phosphoenolpyruvate site. Positions 171, 173, 323, and 350 each coordinate 3-phosphoshikimate. Glutamine 173 is a phosphoenolpyruvate binding site. Aspartate 323 (proton acceptor) is an active-site residue. Phosphoenolpyruvate is bound by residues arginine 354 and arginine 396.

The protein belongs to the EPSP synthase family. In terms of assembly, monomer.

Its subcellular location is the cytoplasm. It carries out the reaction 3-phosphoshikimate + phosphoenolpyruvate = 5-O-(1-carboxyvinyl)-3-phosphoshikimate + phosphate. Its pathway is metabolic intermediate biosynthesis; chorismate biosynthesis; chorismate from D-erythrose 4-phosphate and phosphoenolpyruvate: step 6/7. Its function is as follows. Catalyzes the transfer of the enolpyruvyl moiety of phosphoenolpyruvate (PEP) to the 5-hydroxyl of shikimate-3-phosphate (S3P) to produce enolpyruvyl shikimate-3-phosphate and inorganic phosphate. This is 3-phosphoshikimate 1-carboxyvinyltransferase from Prochlorococcus marinus (strain MIT 9301).